The following is a 369-amino-acid chain: Biglycan (369 aa).

The signal sequence occupies residues 1-16; sequence MRPLWLLTLLLALSQA. Positions 17–37 are excised as a propeptide; that stretch reads LPFEQKGFWDFTLDDGLLMMN. 2 O-linked (Xyl...) (glycosaminoglycan) serine glycosylation sites follow: serine 42 and serine 48. 2 disulfide bridges follow: cysteine 64/cysteine 70 and cysteine 68/cysteine 77. LRR repeat units follow at residues 83 to 103, 104 to 127, 128 to 151, 152 to 172, 173 to 196, 197 to 221, 222 to 242, 243 to 266, 267 to 290, 291 to 313, 314 to 343, and 344 to 369; these read KTVP…NNDI, SELR…NNKI, SKIH…KNHL, VEIP…DNRI, RKVP…GNPL, ENSG…EAKL, TGIP…HNKI, QAIE…HNQI, RMIE…NNKL, SRVP…SNNI, TKVG…NNPV, and PYWE…NYKK. Asparagine 271 and asparagine 312 each carry an N-linked (GlcNAc...) asparagine glycan. A disulfide bridge connects residues cysteine 322 and cysteine 355.

This sequence belongs to the small leucine-rich proteoglycan (SLRP) family. SLRP class I subfamily. In terms of assembly, homodimer. Forms a ternary complex with MFAP2 and ELN. The two attached glycosaminoglycan chains can be either chondroitin sulfate or dermatan sulfate. As to expression, found in several connective tissues, especially in articular cartilages.

Its subcellular location is the secreted. It is found in the extracellular space. The protein resides in the extracellular matrix. May be involved in collagen fiber assembly. This is Biglycan (Bgn) from Rattus norvegicus (Rat).